We begin with the raw amino-acid sequence, 252 residues long: T-box transcription factor mls-1 (252 aa).

The T-box DNA-binding region spans 40–210 (LWRRFHNLGT…SNPFAKGFRE (171 aa)).

As to quaternary structure, may interact with unc-37.

The protein localises to the nucleus. Functionally, probable transcription factor required for the cell fate specification of non-striated uterine muscle precursor cells. Furthermore, may function with the transcriptional corepressor unc-37. The protein is T-box transcription factor mls-1 of Caenorhabditis elegans.